A 726-amino-acid polypeptide reads, in one-letter code: Tripartite terminase subunit 1 (726 aa).

Residues 189–217 (CMKCYEELTLTPNQGKSLRRRLHGKFCNH) form a C3H1-type zinc finger. Residue 626 to 633 (YNDVFGKR) participates in ATP binding.

The protein belongs to the herpesviridae TRM1 protein family. In terms of assembly, associates with TRM2 and TRM3 to form the tripartite terminase complex. Interacts with portal protein.

It localises to the host nucleus. Component of the molecular motor that translocates viral genomic DNA in empty capsid during DNA packaging. Forms a tripartite terminase complex together with TRM2 and TRM3 in the host cytoplasm. Once the complex reaches the host nucleus, it interacts with the capsid portal vertex. This portal forms a ring in which genomic DNA is translocated into the capsid. TRM1 carries an endonuclease activity that plays an important role for the cleavage of concatemeric viral DNA into unit length genomes. The sequence is that of Tripartite terminase subunit 1 from Homo sapiens (Human).